A 293-amino-acid polypeptide reads, in one-letter code: tRNA pseudouridine synthase B (293 aa).

Catalysis depends on Asp-39, which acts as the Nucleophile.

The protein belongs to the pseudouridine synthase TruB family. Type 1 subfamily.

The catalysed reaction is uridine(55) in tRNA = pseudouridine(55) in tRNA. Responsible for synthesis of pseudouridine from uracil-55 in the psi GC loop of transfer RNAs. This is tRNA pseudouridine synthase B from Rickettsia bellii (strain OSU 85-389).